Here is a 96-residue protein sequence, read N- to C-terminus: DNA-directed RNA polymerase subunit Rpo11 (96 aa).

This sequence belongs to the archaeal Rpo11/eukaryotic RPB11/RPC19 RNA polymerase subunit family. In terms of assembly, part of the RNA polymerase complex.

The protein resides in the cytoplasm. It carries out the reaction RNA(n) + a ribonucleoside 5'-triphosphate = RNA(n+1) + diphosphate. Functionally, DNA-dependent RNA polymerase (RNAP) catalyzes the transcription of DNA into RNA using the four ribonucleoside triphosphates as substrates. This Methanococcus maripaludis (strain C5 / ATCC BAA-1333) protein is DNA-directed RNA polymerase subunit Rpo11.